Consider the following 209-residue polypeptide: Small ribosomal subunit protein uS4 (209 aa).

Residues 98-164 (SRLDNVVYRG…TPFIVARETA (67 aa)) form the S4 RNA-binding domain.

This sequence belongs to the universal ribosomal protein uS4 family. Part of the 30S ribosomal subunit. Contacts protein S5. The interaction surface between S4 and S5 is involved in control of translational fidelity.

Its function is as follows. One of the primary rRNA binding proteins, it binds directly to 16S rRNA where it nucleates assembly of the body of the 30S subunit. With S5 and S12 plays an important role in translational accuracy. This is Small ribosomal subunit protein uS4 from Frankia casuarinae (strain DSM 45818 / CECT 9043 / HFP020203 / CcI3).